A 404-amino-acid chain; its full sequence is Cysteine desulfurase IscS (404 aa).

Pyridoxal 5'-phosphate contacts are provided by residues 75–76 (AT), Asn155, Gln183, and 203–205 (SGH). Lys206 is modified (N6-(pyridoxal phosphate)lysine). Thr243 provides a ligand contact to pyridoxal 5'-phosphate. Catalysis depends on Cys328, which acts as the Cysteine persulfide intermediate. Cys328 contacts [2Fe-2S] cluster.

Belongs to the class-V pyridoxal-phosphate-dependent aminotransferase family. NifS/IscS subfamily. Homodimer. Forms a heterotetramer with IscU, interacts with other sulfur acceptors. It depends on pyridoxal 5'-phosphate as a cofactor.

Its subcellular location is the cytoplasm. It carries out the reaction (sulfur carrier)-H + L-cysteine = (sulfur carrier)-SH + L-alanine. The protein operates within cofactor biosynthesis; iron-sulfur cluster biosynthesis. In terms of biological role, master enzyme that delivers sulfur to a number of partners involved in Fe-S cluster assembly, tRNA modification or cofactor biosynthesis. Catalyzes the removal of elemental sulfur atoms from cysteine to produce alanine. Functions as a sulfur delivery protein for Fe-S cluster synthesis onto IscU, an Fe-S scaffold assembly protein, as well as other S acceptor proteins. This is Cysteine desulfurase IscS from Shewanella sp. (strain MR-4).